A 172-amino-acid chain; its full sequence is Adenine phosphoribosyltransferase (172 aa).

The protein belongs to the purine/pyrimidine phosphoribosyltransferase family. In terms of assembly, homodimer.

It localises to the cytoplasm. The catalysed reaction is AMP + diphosphate = 5-phospho-alpha-D-ribose 1-diphosphate + adenine. Its pathway is purine metabolism; AMP biosynthesis via salvage pathway; AMP from adenine: step 1/1. Its function is as follows. Catalyzes a salvage reaction resulting in the formation of AMP, that is energically less costly than de novo synthesis. This Anaeromyxobacter dehalogenans (strain 2CP-1 / ATCC BAA-258) protein is Adenine phosphoribosyltransferase.